Consider the following 240-residue polypeptide: Lectin (240 aa).

The Mn(2+) site is built by glutamate 127 and aspartate 129. Aspartate 129, tyrosine 131, asparagine 133, and aspartate 138 together coordinate Ca(2+). Aspartate 138 and histidine 143 together coordinate Mn(2+).

Belongs to the leguminous lectin family. As to quaternary structure, heterotetramer of two alpha and two beta chains; disulfide bond linked.

In terms of biological role, binds preferentially to oligosaccharides bearing the sequence Man-alpha-1-&gt;2 Man-alpha-1-&gt;6 Man-alpha-1-&gt;6Man found in early steps of glycoprotein processing in the endoplasmic reticulum. It binds weakly to highly processed oligosaccharide structures. This Leucomphalos mildbraedii (Bowringia mildbraedii) protein is Lectin.